Here is a 192-residue protein sequence, read N- to C-terminus: 3-hydroxyanthranilate 3,4-dioxygenase 1 (192 aa).

Arginine 50 is an O2 binding site. Fe cation is bound by residues histidine 54, glutamate 60, and histidine 102. A substrate-binding site is contributed by glutamate 60. Positions 106 and 116 each coordinate substrate. A divalent metal cation-binding residues include cysteine 131, cysteine 134, cysteine 168, and cysteine 171.

Belongs to the 3-HAO family. The cofactor is Fe(2+).

It localises to the cytoplasm. The catalysed reaction is 3-hydroxyanthranilate + O2 = (2Z,4Z)-2-amino-3-carboxymuconate 6-semialdehyde. The protein operates within cofactor biosynthesis; NAD(+) biosynthesis; quinolinate from L-kynurenine: step 3/3. In terms of biological role, catalyzes the oxidative ring opening of 3-hydroxyanthranilate to 2-amino-3-carboxymuconate semialdehyde, which spontaneously cyclizes to quinolinate. The protein is 3-hydroxyanthranilate 3,4-dioxygenase 1 (bna1-1) of Aspergillus clavatus (strain ATCC 1007 / CBS 513.65 / DSM 816 / NCTC 3887 / NRRL 1 / QM 1276 / 107).